A 465-amino-acid polypeptide reads, in one-letter code: ATP synthase subunit beta (465 aa).

148–155 (GGAGVGKT) is a binding site for ATP.

The protein belongs to the ATPase alpha/beta chains family. F-type ATPases have 2 components, CF(1) - the catalytic core - and CF(0) - the membrane proton channel. CF(1) has five subunits: alpha(3), beta(3), gamma(1), delta(1), epsilon(1). CF(0) has three main subunits: a(1), b(2) and c(9-12). The alpha and beta chains form an alternating ring which encloses part of the gamma chain. CF(1) is attached to CF(0) by a central stalk formed by the gamma and epsilon chains, while a peripheral stalk is formed by the delta and b chains.

It is found in the cell inner membrane. It catalyses the reaction ATP + H2O + 4 H(+)(in) = ADP + phosphate + 5 H(+)(out). Its function is as follows. Produces ATP from ADP in the presence of a proton gradient across the membrane. The catalytic sites are hosted primarily by the beta subunits. This is ATP synthase subunit beta from Chromobacterium violaceum (strain ATCC 12472 / DSM 30191 / JCM 1249 / CCUG 213 / NBRC 12614 / NCIMB 9131 / NCTC 9757 / MK).